Here is a 262-residue protein sequence, read N- to C-terminus: Acyl-[acyl-carrier-protein]--UDP-N-acetylglucosamine O-acyltransferase (262 aa).

The protein belongs to the transferase hexapeptide repeat family. LpxA subfamily. Homotrimer.

It is found in the cytoplasm. It carries out the reaction a (3R)-hydroxyacyl-[ACP] + UDP-N-acetyl-alpha-D-glucosamine = a UDP-3-O-[(3R)-3-hydroxyacyl]-N-acetyl-alpha-D-glucosamine + holo-[ACP]. The protein operates within glycolipid biosynthesis; lipid IV(A) biosynthesis; lipid IV(A) from (3R)-3-hydroxytetradecanoyl-[acyl-carrier-protein] and UDP-N-acetyl-alpha-D-glucosamine: step 1/6. Involved in the biosynthesis of lipid A, a phosphorylated glycolipid that anchors the lipopolysaccharide to the outer membrane of the cell. This Salmonella heidelberg (strain SL476) protein is Acyl-[acyl-carrier-protein]--UDP-N-acetylglucosamine O-acyltransferase.